The sequence spans 325 residues: Biotin synthase (325 aa).

In terms of domain architecture, Radical SAM core spans 36–254; the sequence is NEVQLAMLLS…IALARIMFPK (219 aa). [4Fe-4S] cluster contacts are provided by Cys51, Cys55, and Cys58. Positions 95, 126, 186, and 258 each coordinate [2Fe-2S] cluster.

This sequence belongs to the radical SAM superfamily. Biotin synthase family. Homodimer. [4Fe-4S] cluster serves as cofactor. It depends on [2Fe-2S] cluster as a cofactor.

The catalysed reaction is (4R,5S)-dethiobiotin + (sulfur carrier)-SH + 2 reduced [2Fe-2S]-[ferredoxin] + 2 S-adenosyl-L-methionine = (sulfur carrier)-H + biotin + 2 5'-deoxyadenosine + 2 L-methionine + 2 oxidized [2Fe-2S]-[ferredoxin]. It functions in the pathway cofactor biosynthesis; biotin biosynthesis; biotin from 7,8-diaminononanoate: step 2/2. Functionally, catalyzes the conversion of dethiobiotin (DTB) to biotin by the insertion of a sulfur atom into dethiobiotin via a radical-based mechanism. In Neorickettsia sennetsu (strain ATCC VR-367 / Miyayama) (Ehrlichia sennetsu), this protein is Biotin synthase.